A 772-amino-acid chain; its full sequence is MLRTIILKAGSNASIPSPSRQNKLLRFFATAGAVSRTSPGSIKKIFDDNSYWRNINGQDANNSKISQYLFKKNKTGLFKNPYLTSPDGLRKFSQVSLQQAQELLDKMRNDFSESGKLTYIMNLDRLSDTLCRVIDLCEFIRSTHPDDAFVRAAQDCHEQMFEFMNVLNTDVSLCNILKSVLNNPEVSSKLSAEELKVGKILLDDFEKSGIYMNPDVREKFIQLSQEISLVGQEFINHTDYPGSNSVKIPCKDLDNSKVSTFLLKQLNKDVKGQNYKVPTFGYAAYALLKSCENEMVRKKLWTALHSCSDKQVKRLSHLIKLRAILANLMHKTSYAEYQLEGKMAKNPKDVQDFILTLMNNTIEKTANELKFIAELKAKDLKKPLTTNTDEILKLVRPWDRDYYTGKYFQLNPSNSPNAKEISYYFTLGNVIQGLSDLFQQIYGIRLEPAITDEGETWSPDVRRLNVISEEEGIIGIIYCDLFERNGKTSNPAHFTVCCSRQIYPSETDFSTIQVGENPDGTYFQLPVISLVCNFSPILIASKKSLCFLQLSEVETLFHEMGHAMHSMLGRTHMQNISGTRCATDFVELPSILMEHFAKDIRILTKIGKHYGTGETIQADMLQRFMKSTNFLQNCETYSQAKMAMLDQSFHDEKIISDIDNFDVVENYQALERRLKVLVDDQSNWCGRFGHLFGYGATYYSYLFDRTIASKIWYALFEDDPYSRKNGDKFKKHLLKWGGLKDPWKCIADVLECPMLEKGGSDAMEFIAQSHKS.

The N-terminal 37 residues, 1–37 (MLRTIILKAGSNASIPSPSRQNKLLRFFATAGAVSRT), are a transit peptide targeting the mitochondrion. His-558 is a Zn(2+) binding site. Glu-559 is an active-site residue. 2 residues coordinate Zn(2+): His-562 and Glu-587.

The protein belongs to the peptidase M3 family. It depends on Zn(2+) as a cofactor.

It localises to the mitochondrion matrix. It carries out the reaction Release of an N-terminal octapeptide as second stage of processing of some proteins imported into the mitochondrion.. With respect to regulation, stimulated by Fe(2+). Functionally, cleaves proteins, imported into the mitochondrion, to their mature size. While most mitochondrial precursor proteins are processed to the mature form in one step by mitochondrial processing peptidase (MPP), the sequential cleavage by MIP of an octapeptide after initial processing by MPP is a required step for a subgroup of nuclear-encoded precursor proteins destined for the matrix or the inner membrane. Cleaves precursor proteins of respiratory components, including subunits of the electron transport chain and tricarboxylic acid cycle enzymes, and components of the mitochondrial genetic machinery, including ribosomal proteins, translation factors, and proteins required for mitochondrial DNA metabolism. The sequence is that of Mitochondrial intermediate peptidase (OCT1) from Saccharomyces cerevisiae (strain ATCC 204508 / S288c) (Baker's yeast).